The chain runs to 381 residues: O-antigen chain mannosyltransferase B (381 aa).

Belongs to the glycosyltransferase group 1 family. Glycosyltransferase 4 subfamily.

The catalysed reaction is alpha-D-mannosyl-(1-&gt;3)-N-acetyl-alpha-D-glucosaminyl-di-trans,octa-cis-undecaprenyl diphosphate + 2 GDP-alpha-D-mannose = alpha-D-mannosyl-(1-&gt;3)-alpha-D-mannosyl-(1-&gt;3)-alpha-D-mannosyl-(1-&gt;3)-N-acetyl-alpha-D-glucosaminyl-di-trans,octa-cis-undecaprenyl diphosphate + 2 GDP + 2 H(+). The protein operates within bacterial outer membrane biogenesis; LPS O-antigen biosynthesis. In terms of biological role, mannosyltransferase involved in the biosynthesis of the repeat unit of the lipopolysaccharide (LPS) O-antigen region. Catalyzes the transfer of two alpha-(1-&gt;3)-linked mannose residues to the product of the WbdC enzyme during the synthesis of the adapter region. The polypeptide is O-antigen chain mannosyltransferase B (Escherichia coli).